A 284-amino-acid polypeptide reads, in one-letter code: NADPH-dependent 7-cyano-7-deazaguanine reductase (284 aa).

91 to 93 lines the substrate pocket; sequence IES. 93–94 contributes to the NADPH binding site; sequence SK. Cys-192 (thioimide intermediate) is an active-site residue. Catalysis depends on Asp-199, which acts as the Proton donor. 231–232 serves as a coordination point for substrate; it reads HE. 260-261 is a binding site for NADPH; that stretch reads RG.

The protein belongs to the GTP cyclohydrolase I family. QueF type 2 subfamily. As to quaternary structure, homodimer.

Its subcellular location is the cytoplasm. It catalyses the reaction 7-aminomethyl-7-carbaguanine + 2 NADP(+) = 7-cyano-7-deazaguanine + 2 NADPH + 3 H(+). It functions in the pathway tRNA modification; tRNA-queuosine biosynthesis. Functionally, catalyzes the NADPH-dependent reduction of 7-cyano-7-deazaguanine (preQ0) to 7-aminomethyl-7-deazaguanine (preQ1). This Shewanella denitrificans (strain OS217 / ATCC BAA-1090 / DSM 15013) protein is NADPH-dependent 7-cyano-7-deazaguanine reductase.